The sequence spans 646 residues: Beta-mannosyltransferase 6 (646 aa).

At 1–25 (MGNYKPSIKQYVVTVKAIKSSQFGR) the chain is on the cytoplasmic side. The chain crosses the membrane as a helical span at residues 26–46 (LGICAVVLLFVLGYPFYFISN). At 47 to 646 (NPFDTSIRYQ…LTGGWLPSHN (600 aa)) the chain is on the extracellular side. 9 N-linked (GlcNAc...) asparagine glycosylation sites follow: Asn-62, Asn-81, Asn-103, Asn-117, Asn-127, Asn-132, Asn-146, Asn-334, and Asn-393.

Belongs to the BMT family.

The protein resides in the membrane. Its function is as follows. Beta-mannosyltransferase involved in cell wall biosynthesis. Required for beta-1,2-mannose transfer on phospholipomannan. Required for pro-inflammatory response in macrophages through phospholipomannan-induced TNF-alpha production. The sequence is that of Beta-mannosyltransferase 6 (BMT6) from Candida albicans (strain SC5314 / ATCC MYA-2876) (Yeast).